Here is a 256-residue protein sequence, read N- to C-terminus: Indole-3-glycerol phosphate synthase (256 aa).

This sequence belongs to the TrpC family.

It catalyses the reaction 1-(2-carboxyphenylamino)-1-deoxy-D-ribulose 5-phosphate + H(+) = (1S,2R)-1-C-(indol-3-yl)glycerol 3-phosphate + CO2 + H2O. Its pathway is amino-acid biosynthesis; L-tryptophan biosynthesis; L-tryptophan from chorismate: step 4/5. The polypeptide is Indole-3-glycerol phosphate synthase (Chlorobaculum tepidum (strain ATCC 49652 / DSM 12025 / NBRC 103806 / TLS) (Chlorobium tepidum)).